Reading from the N-terminus, the 524-residue chain is Sexual development regulator velC (524 aa).

Disordered regions lie at residues 114 to 195, 322 to 349, 380 to 413, and 503 to 524; these read NRVL…PVHS, PGSG…MSSY, VDEE…HRFR, and GMGK…ARVE. Composition is skewed to polar residues over residues 131–153 and 178–195; these read TTGS…ENAG and LDSQ…PVHS. The region spanning 248 to 500 is the Velvet domain; that stretch reads SSSSRYRLFI…ELGFVELKTR (253 aa). Polar residues predominate over residues 393 to 402; it reads PSSTDDSTYD.

This sequence belongs to the velvet family. VelC subfamily. As to quaternary structure, interacts with vosA.

The protein localises to the nucleus. Velvet-domain-containing protein that acts as a positive regulator of sexual development. Positively regulates the production of the sexual fruiting bodies called cleistothecia. This chain is Sexual development regulator velC, found in Emericella nidulans (strain FGSC A4 / ATCC 38163 / CBS 112.46 / NRRL 194 / M139) (Aspergillus nidulans).